The following is a 297-amino-acid chain: tRNA-cytidine(32) 2-sulfurtransferase (297 aa).

A PP-loop motif motif is present at residues 45-50 (SGGKDS). Residues cysteine 120, cysteine 123, and cysteine 211 each coordinate [4Fe-4S] cluster.

Belongs to the TtcA family. Homodimer. It depends on Mg(2+) as a cofactor. [4Fe-4S] cluster is required as a cofactor.

The protein resides in the cytoplasm. It carries out the reaction cytidine(32) in tRNA + S-sulfanyl-L-cysteinyl-[cysteine desulfurase] + AH2 + ATP = 2-thiocytidine(32) in tRNA + L-cysteinyl-[cysteine desulfurase] + A + AMP + diphosphate + H(+). Its pathway is tRNA modification. Its function is as follows. Catalyzes the ATP-dependent 2-thiolation of cytidine in position 32 of tRNA, to form 2-thiocytidine (s(2)C32). The sulfur atoms are provided by the cysteine/cysteine desulfurase (IscS) system. This chain is tRNA-cytidine(32) 2-sulfurtransferase, found in Vibrio campbellii (strain ATCC BAA-1116).